We begin with the raw amino-acid sequence, 472 residues long: UDP-glycosyltransferase 708G2 (472 aa).

The Proton acceptor role is filled by His23. Residue His23 participates in an anthocyanidin binding. The active-site Charge relay is Asp117. Thr140 is a UDP-alpha-D-glucose binding site. The segment at 283–284 (SR) is UDP. UDP-alpha-D-glucose-binding residues include Val346, Gln348, His363, Trp366, Asn367, Ser368, and Glu371. Gly386 contacts an anthocyanidin. The UDP-alpha-D-glucose site is built by Asp387 and Gln388.

Belongs to the UDP-glycosyltransferase family. As to expression, expressed at low levels in leaves, flowers and immature leaves.

It carries out the reaction a 3'-hydro-2'-hydroxy-beta-oxodihydrochalcone + UDP-alpha-D-glucose = a 3'-(beta-D-glucopyranosyl)-2'-hydroxy-beta-oxodihydrochalcone + UDP + H(+). Functionally, UDP-glucose-dependent glucosyltransferase catalyzing the C-glucosylation of 2-hydroxyflavanones (2-hydroxylnaringenin and 2-hydroxypinocembrin) and phloretin. No activity with flavanones, flavones or flavonols. Exhibits C-glucosylation activity toward 2-phenyl-2',4',6'-trihydroxyacetophenone. Can use UDP-xylose as sugar donor, but catalytic efficiency is much lower toward UDP-xylose than toward UDP-glucose. In Citrus unshiu (Satsuma mandarin), this protein is UDP-glycosyltransferase 708G2 (UGT708G2).